Reading from the N-terminus, the 43-residue chain is Venom protein E2 (43 aa).

2 cysteine pairs are disulfide-bonded: cysteine 3–cysteine 20 and cysteine 14–cysteine 39.

Expressed by the venom gland.

Its subcellular location is the secreted. Its function is as follows. Neurotoxin. Blocks muscular nicotinic acetylcholine receptors (nAChR). This chain is Venom protein E2, found in Micrurus pyrrhocryptus (Coral snake).